Here is a 92-residue protein sequence, read N- to C-terminus: Bombyxin A-4 (92 aa).

The N-terminal stretch at 1–19 is a signal peptide; it reads MKILLAIALMLSTVMWVST. Gln-20 is subject to Pyrrolidone carboxylic acid. Cystine bridges form between Cys-29–Cys-79, Cys-41–Cys-92, and Cys-78–Cys-83. Positions 50 to 70 are cleaved as a propeptide — c peptide like; it reads SGAQFASYGSAWLMPYSEGRG.

Belongs to the insulin family. As to quaternary structure, heterodimer of a B chain and an A chain linked by two disulfide bonds.

Its subcellular location is the secreted. Functionally, brain peptide responsible for activation of prothoracic glands to produce ecdysone in insects. The protein is Bombyxin A-4 (BBXA4) of Bombyx mori (Silk moth).